Here is a 207-residue protein sequence, read N- to C-terminus: Protein ERP4 (207 aa).

Residues 1-21 form the signal peptide; that stretch reads MRVFTLIAILFSSSLLTHAFS. Topologically, residues 22 to 174 are lumenal; that stretch reads SNYAPVGISL…TVSSTESRLT (153 aa). Residues 36–118 enclose the GOLD domain; sequence KECLYYDLSS…PKKVEITLEK (83 aa). A helical transmembrane segment spans residues 175–195; sequence WLSLLIMGVMVGISIVQALII. At 196 to 207 the chain is on the cytoplasmic side; that stretch reads QFFFTSRQKNYV.

It belongs to the EMP24/GP25L family.

It localises to the endoplasmic reticulum membrane. Involved in vesicular protein trafficking. This is Protein ERP4 (ERP4) from Saccharomyces cerevisiae (strain ATCC 204508 / S288c) (Baker's yeast).